A 378-amino-acid polypeptide reads, in one-letter code: uncharacterized protein (378 aa).

11 helical membrane passes run 12–34 (SLAFALYDTGETILGALVVSTFF), 44–66 (VKIYSLSYGISLLASFALAIFLG), 92–112 (SIALLYGTPYLALLSFLLMLI), 132–154 (GFASGLGVSFGYVGSAIALIFLA), 161–180 (EVYAVVGLIFLILAVPSIIT), 200–222 (TFLLFLLSLLTLTEVANTLIAMM), 235–257 (VEIYRIIGFSALGGVLGGIFWGV), 267–285 (VFPLGFFLWSFFFILLFFA), 290–312 (LIFVGLLAGFSLAHLWSTSRVYI), 327–349 (FLSLTERVASSFGLFLWSFFLFI), and 356–373 (LSALLMGTLPLIGFFIYL).

It is found in the cell membrane. This is an uncharacterized protein from Aquifex aeolicus (strain VF5).